A 427-amino-acid polypeptide reads, in one-letter code: Peptidase B (427 aa).

2 residues coordinate Mn(2+): K195 and D200. K207 is an active-site residue. The Mn(2+) site is built by D218, D277, and E279. The active site involves R281.

The protein belongs to the peptidase M17 family. As to quaternary structure, homohexamer. Mn(2+) serves as cofactor.

It is found in the cytoplasm. It catalyses the reaction Release of an N-terminal amino acid, Xaa, from a peptide or arylamide. Xaa is preferably Glu or Asp but may be other amino acids, including Leu, Met, His, Cys and Gln.. Its function is as follows. Probably plays an important role in intracellular peptide degradation. The sequence is that of Peptidase B from Escherichia coli O127:H6 (strain E2348/69 / EPEC).